We begin with the raw amino-acid sequence, 351 residues long: Putative NBPF family member NBPF5 (351 aa).

Coiled-coil stretches lie at residues 10–43 (SERAEMNILEINQELRSQLAESNQQFRDLKEKFL) and 69–115 (DSVL…KLRE). A disordered region spans residues 157-285 (HLVHKLSPEN…VPPRHHDKSN (129 aa)). Positions 165 to 179 (ENDEDEDEDEDDKDE) are enriched in acidic residues. The region spanning 174 to 261 (EDDKDEEVEK…EEEEALNIPP (88 aa)) is the Olduvai domain. Positions 192–202 (EVQKTEEKEVP) are enriched in basic and acidic residues. The span at 214–226 (SNSHNPSNSNQPH) shows a compositional bias: low complexity. 2 stretches are compositionally biased toward basic and acidic residues: residues 232 to 251 (TFKEHEVDSALVVESEHPHD) and 264 to 273 (QNDHEEEEGK).

Belongs to the NBPF family. As to expression, expressed in brain and medulla.

It is found in the cytoplasm. The polypeptide is Putative NBPF family member NBPF5 (Homo sapiens (Human)).